The following is a 393-amino-acid chain: Formate-dependent phosphoribosylglycinamide formyltransferase (393 aa).

Residues Glu-22 to Leu-23 and Glu-82 contribute to the N(1)-(5-phospho-beta-D-ribosyl)glycinamide site. ATP-binding positions include Arg-114, Lys-155, Ser-160–Gln-165, Glu-195–Ile-198, and Glu-203. The ATP-grasp domain occupies Arg-119–Leu-308. Residues Glu-267 and Glu-279 each contribute to the Mg(2+) site. Residues Asp-286, Lys-356, and Arg-363–Arg-364 contribute to the N(1)-(5-phospho-beta-D-ribosyl)glycinamide site.

It belongs to the PurK/PurT family. In terms of assembly, homodimer.

It catalyses the reaction N(1)-(5-phospho-beta-D-ribosyl)glycinamide + formate + ATP = N(2)-formyl-N(1)-(5-phospho-beta-D-ribosyl)glycinamide + ADP + phosphate + H(+). It participates in purine metabolism; IMP biosynthesis via de novo pathway; N(2)-formyl-N(1)-(5-phospho-D-ribosyl)glycinamide from N(1)-(5-phospho-D-ribosyl)glycinamide (formate route): step 1/1. Its function is as follows. Involved in the de novo purine biosynthesis. Catalyzes the transfer of formate to 5-phospho-ribosyl-glycinamide (GAR), producing 5-phospho-ribosyl-N-formylglycinamide (FGAR). Formate is provided by PurU via hydrolysis of 10-formyl-tetrahydrofolate. The polypeptide is Formate-dependent phosphoribosylglycinamide formyltransferase (Stutzerimonas stutzeri (strain A1501) (Pseudomonas stutzeri)).